The following is a 95-amino-acid chain: Aspartyl/glutamyl-tRNA(Asn/Gln) amidotransferase subunit C (95 aa).

A disordered region spans residues 51-95 (PTSHATLTSSRLREDVTRPSLPPEKSLANAPAKSDTSFAVPKIIE).

It belongs to the GatC family. As to quaternary structure, heterotrimer of A, B and C subunits.

It catalyses the reaction L-glutamyl-tRNA(Gln) + L-glutamine + ATP + H2O = L-glutaminyl-tRNA(Gln) + L-glutamate + ADP + phosphate + H(+). It carries out the reaction L-aspartyl-tRNA(Asn) + L-glutamine + ATP + H2O = L-asparaginyl-tRNA(Asn) + L-glutamate + ADP + phosphate + 2 H(+). Allows the formation of correctly charged Asn-tRNA(Asn) or Gln-tRNA(Gln) through the transamidation of misacylated Asp-tRNA(Asn) or Glu-tRNA(Gln) in organisms which lack either or both of asparaginyl-tRNA or glutaminyl-tRNA synthetases. The reaction takes place in the presence of glutamine and ATP through an activated phospho-Asp-tRNA(Asn) or phospho-Glu-tRNA(Gln). The polypeptide is Aspartyl/glutamyl-tRNA(Asn/Gln) amidotransferase subunit C (Myxococcus xanthus (strain DK1622)).